A 236-amino-acid polypeptide reads, in one-letter code: uncharacterized protein (236 aa).

Residues 1-73 are disordered; it reads MEPGGSENAA…GGGWGWGNTQ (73 aa).

This is an uncharacterized protein from Homo sapiens (Human).